The chain runs to 154 residues: MutT-like protein (154 aa).

Residues 15-136 (PLHSVSVAGV…YAIRLLDALD (122 aa)) enclose the Nudix hydrolase domain. Residues glycine 48, glutamate 63, glutamate 66, and glutamate 67 each contribute to the Mg(2+) site. The Nudix box signature appears at 48–69 (GVLELDETPETGVAREVWEETG).

This sequence belongs to the Nudix hydrolase family.

This is MutT-like protein from Streptomyces ambofaciens.